A 190-amino-acid chain; its full sequence is MTSEVALFGKWSYSGVTCPDISLQDYICVKKNVFTPHSAGRYNKVRFRKAQCPIVERLANSMMMFGRNAGKKVMAVRIIEQAFEIIYLLTDKNPLQVLVEAVMNSGPREDSTRIGSAGTVRRQAVDVSPMRRVNHAVYLLTQGTRAAAFRNIRTVAECLADELINASKGSPNSYSIKQKDALERTAKSHR.

Threonine 2 is modified (N-acetylthreonine).

The protein belongs to the universal ribosomal protein uS7 family. In terms of assembly, component of the small ribosomal subunit. Part of the small subunit (SSU) processome, composed of more than 70 proteins and the RNA chaperone small nucleolar RNA (snoRNA) U3.

Its subcellular location is the cytoplasm. It is found in the nucleus. The protein resides in the nucleolus. Functionally, component of the small ribosomal subunit. The ribosome is a large ribonucleoprotein complex responsible for the synthesis of proteins in the cell. Part of the small subunit (SSU) processome, first precursor of the small eukaryotic ribosomal subunit. During the assembly of the SSU processome in the nucleolus, many ribosome biogenesis factors, an RNA chaperone and ribosomal proteins associate with the nascent pre-rRNA and work in concert to generate RNA folding, modifications, rearrangements and cleavage as well as targeted degradation of pre-ribosomal RNA by the RNA exosome. This is Small ribosomal subunit protein uS7 (rps5) from Dictyostelium discoideum (Social amoeba).